Consider the following 360-residue polypeptide: UDP-N-acetylglucosamine--N-acetylmuramyl-(pentapeptide) pyrophosphoryl-undecaprenol N-acetylglucosamine transferase (360 aa).

UDP-N-acetyl-alpha-D-glucosamine is bound by residues 16–18, Asn-128, Arg-165, Ser-191, Ile-247, 266–271, and Gln-292; these read TGG and ALTVSE.

The protein belongs to the glycosyltransferase 28 family. MurG subfamily.

It localises to the cell inner membrane. It carries out the reaction di-trans,octa-cis-undecaprenyl diphospho-N-acetyl-alpha-D-muramoyl-L-alanyl-D-glutamyl-meso-2,6-diaminopimeloyl-D-alanyl-D-alanine + UDP-N-acetyl-alpha-D-glucosamine = di-trans,octa-cis-undecaprenyl diphospho-[N-acetyl-alpha-D-glucosaminyl-(1-&gt;4)]-N-acetyl-alpha-D-muramoyl-L-alanyl-D-glutamyl-meso-2,6-diaminopimeloyl-D-alanyl-D-alanine + UDP + H(+). Its pathway is cell wall biogenesis; peptidoglycan biosynthesis. Its function is as follows. Cell wall formation. Catalyzes the transfer of a GlcNAc subunit on undecaprenyl-pyrophosphoryl-MurNAc-pentapeptide (lipid intermediate I) to form undecaprenyl-pyrophosphoryl-MurNAc-(pentapeptide)GlcNAc (lipid intermediate II). This Shewanella amazonensis (strain ATCC BAA-1098 / SB2B) protein is UDP-N-acetylglucosamine--N-acetylmuramyl-(pentapeptide) pyrophosphoryl-undecaprenol N-acetylglucosamine transferase.